Here is a 253-residue protein sequence, read N- to C-terminus: 1-(5-phosphoribosyl)-5-[(5-phosphoribosylamino)methylideneamino] imidazole-4-carboxamide isomerase (253 aa).

Catalysis depends on Asp-8, which acts as the Proton acceptor. Asp-131 acts as the Proton donor in catalysis.

Belongs to the HisA/HisF family.

The protein resides in the cytoplasm. The catalysed reaction is 1-(5-phospho-beta-D-ribosyl)-5-[(5-phospho-beta-D-ribosylamino)methylideneamino]imidazole-4-carboxamide = 5-[(5-phospho-1-deoxy-D-ribulos-1-ylimino)methylamino]-1-(5-phospho-beta-D-ribosyl)imidazole-4-carboxamide. The protein operates within amino-acid biosynthesis; L-histidine biosynthesis; L-histidine from 5-phospho-alpha-D-ribose 1-diphosphate: step 4/9. The chain is 1-(5-phosphoribosyl)-5-[(5-phosphoribosylamino)methylideneamino] imidazole-4-carboxamide isomerase from Polynucleobacter necessarius subsp. necessarius (strain STIR1).